Consider the following 139-residue polypeptide: Putative pre-16S rRNA nuclease (139 aa).

The protein belongs to the YqgF nuclease family.

The protein localises to the cytoplasm. Functionally, could be a nuclease involved in processing of the 5'-end of pre-16S rRNA. The sequence is that of Putative pre-16S rRNA nuclease from Streptococcus mutans serotype c (strain ATCC 700610 / UA159).